Here is a 176-residue protein sequence, read N- to C-terminus: NADH-quinone oxidoreductase subunit B 1 (176 aa).

Positions 55, 56, 120, and 150 each coordinate [4Fe-4S] cluster.

This sequence belongs to the complex I 20 kDa subunit family. NDH-1 is composed of 14 different subunits. Subunits NuoB, C, D, E, F, and G constitute the peripheral sector of the complex. The cofactor is [4Fe-4S] cluster.

The protein resides in the cell inner membrane. It carries out the reaction a quinone + NADH + 5 H(+)(in) = a quinol + NAD(+) + 4 H(+)(out). NDH-1 shuttles electrons from NADH, via FMN and iron-sulfur (Fe-S) centers, to quinones in the respiratory chain. Couples the redox reaction to proton translocation (for every two electrons transferred, four hydrogen ions are translocated across the cytoplasmic membrane), and thus conserves the redox energy in a proton gradient. In Cereibacter sphaeroides (strain ATCC 17029 / ATH 2.4.9) (Rhodobacter sphaeroides), this protein is NADH-quinone oxidoreductase subunit B 1.